Reading from the N-terminus, the 257-residue chain is NAD-capped RNA hydrolase NudC (257 aa).

Substrate contacts are provided by Lys-27 and Arg-71. 2 residues coordinate Zn(2+): Cys-100 and Cys-103. Glu-113 contributes to the substrate binding site. Cys-118 and Cys-121 together coordinate Zn(2+). Substrate is bound at residue Tyr-126. Positions 127–251 constitute a Nudix hydrolase domain; it reads PQIAPCIIVG…IARRLIEDTI (125 aa). A divalent metal cation contacts are provided by Ala-160, Glu-176, and Glu-180. The Nudix box signature appears at 161–182; it reads GFVEVGETLEEAVVREVMEESN. Substrate is bound at residue 194-201; that stretch reads QPWPFPHS. Glu-221 is a binding site for a divalent metal cation. Substrate is bound at residue Ala-243.

Belongs to the Nudix hydrolase family. NudC subfamily. In terms of assembly, homodimer. Mg(2+) is required as a cofactor. Requires Mn(2+) as cofactor. It depends on Zn(2+) as a cofactor.

The catalysed reaction is a 5'-end NAD(+)-phospho-ribonucleoside in mRNA + H2O = a 5'-end phospho-adenosine-phospho-ribonucleoside in mRNA + beta-nicotinamide D-ribonucleotide + 2 H(+). It catalyses the reaction NAD(+) + H2O = beta-nicotinamide D-ribonucleotide + AMP + 2 H(+). It carries out the reaction NADH + H2O = reduced beta-nicotinamide D-ribonucleotide + AMP + 2 H(+). Functionally, mRNA decapping enzyme that specifically removes the nicotinamide adenine dinucleotide (NAD) cap from a subset of mRNAs by hydrolyzing the diphosphate linkage to produce nicotinamide mononucleotide (NMN) and 5' monophosphate mRNA. The NAD-cap is present at the 5'-end of some mRNAs and stabilizes RNA against 5'-processing. Has preference for mRNAs with a 5'-end purine. Catalyzes the hydrolysis of a broad range of dinucleotide pyrophosphates. This is NAD-capped RNA hydrolase NudC from Photorhabdus laumondii subsp. laumondii (strain DSM 15139 / CIP 105565 / TT01) (Photorhabdus luminescens subsp. laumondii).